The following is a 200-amino-acid chain: Dephospho-CoA kinase (200 aa).

In terms of domain architecture, DPCK spans 4 to 200 (VIGLTGGIGS…QKYIKMSHLY (197 aa)). ATP is bound at residue 12–17 (GSGKTT).

Belongs to the CoaE family.

Its subcellular location is the cytoplasm. It carries out the reaction 3'-dephospho-CoA + ATP = ADP + CoA + H(+). It functions in the pathway cofactor biosynthesis; coenzyme A biosynthesis; CoA from (R)-pantothenate: step 5/5. In terms of biological role, catalyzes the phosphorylation of the 3'-hydroxyl group of dephosphocoenzyme A to form coenzyme A. The sequence is that of Dephospho-CoA kinase from Photobacterium profundum (strain SS9).